We begin with the raw amino-acid sequence, 991 residues long: Toll-like receptor 13 (991 aa).

The first 68 residues, 1 to 68, serve as a signal peptide directing secretion; that stretch reads MSGLYRILVQ…GFSLPPVAET (68 aa). Residues 69-783 are Extracellular-facing; the sequence is YGFNKCTQYE…DAMCNFDLGK (715 aa). N-linked (GlcNAc...) asparagine glycans are attached at residues Asn-93, Asn-109, and Asn-125. LRR repeat units follow at residues 104–125, 128–149, 152–174, 175–196, 199–220, 225–246, 248–268, 271–292, 295–315, 318–338, 348–368, 372–394, 397–418, 421–442, 445–466, 469–490, 493–514, 517–538, 541–562, 565–585, 594–617, 620–641, 644–665, 672–693, and 696–716; these read YTTHLNLTHNEIQVLPPWSFTN, ALVDLRLEWNSIWKIDEGAFRG, NLTLLNLVENKIQSVNNSFEGLS, SLKTLLLSHNQITHIHKDAFTP, KLKYLSLSRNNISDFSGILEAV, CLERLDLTNNSIMYLDHSPRSL, SLTHLSFEGNKLRELNFSALS, NLTNLSASRNGNKVIQNVYLKT, QLKSLNLSGTVIKLENLSAKH, NLRAMDLSNWELRHGHLDMKT, KLETLVFQKNVTNAEGIKQLA, RLLFLDLGQNSDLIYLNDSEFNA, SLQKLNLNKCQLSFINNRTWSS, NLTSLDLSHNKFKSFPDFAFSP, HLEFLSLSRNPITELNNLAFSG, ALKELNLAACWIVTIDRYSFTQ, NLEVLDLGDNNIRTLNHGTFRP, KLQSLILSHNCLKILEPNSFSG, NLRSLDLMYNSLSYFHEHLFSG, KLLILKLGFNKITYETTRTLQ, SLKQLNLEGQRHGIQVVPSNFFQG, SLQELLLGKNPSVFLDHHQFDP, NLTKLDISGTKDGDRSLYLNAS, RLKILRLENNNLESLVPDMFSS, and SLQVFSLRFNNLKVINQSHLK. Residues Asn-152 and Asn-167 are each glycosylated (N-linked (GlcNAc...) asparagine). N-linked (GlcNAc...) asparagine glycans are attached at residues Asn-209, Asn-233, Asn-263, Asn-271, Asn-274, Asn-300, and Asn-310. Residues Asn-357, Asn-388, Asn-413, and Asn-421 are each glycosylated (N-linked (GlcNAc...) asparagine). N-linked (GlcNAc...) asparagine glycosylation is found at Asn-644 and Asn-663. Asn-711 and Asn-742 each carry an N-linked (GlcNAc...) asparagine glycan. The LRRCT domain maps to 729–779; the sequence is NKLQCTCDNLWFKNWSMNTEEVHIPFLRSYPCQQPGSQSLLIDFDDAMCNF. The helical transmembrane segment at 784-804 threads the bilayer; the sequence is VYFLCSFSMVLSTMVFSWFST. The Cytoplasmic segment spans residues 805–991; sequence KMIASLWYGL…KENTHLIVVE (187 aa). Residues 832-975 form the TIR domain; the sequence is FLYDAFVSFS…LFWARIRNAL (144 aa).

Belongs to the Toll-like receptor family. In terms of assembly, binds MYD88 via their respective TIR domains. Interacts with UNC93B1.

Its subcellular location is the endosome membrane. Functionally, component of innate and adaptive immunity that recognizes and binds 23S rRNA from bacteria. TLRs (Toll-like receptors) control host immune response against pathogens through recognition of molecular patterns specific to microorganisms. Acts via MYD88 and TRAF6, leading to NF-kappa-B activation, cytokine secretion and the inflammatory response. Specifically binds the 5'-CGGAAAGACC-3' sequence on bacterial 23S rRNA, a sequence also bound by MLS group antibiotics (including erythromycin). May also recognize vesicular stomatitis virus; however, these data require additional evidences. The polypeptide is Toll-like receptor 13 (Tlr13) (Mus musculus (Mouse)).